A 365-amino-acid polypeptide reads, in one-letter code: Flagellin 1 (365 aa).

Belongs to the bacterial flagellin family.

The protein resides in the secreted. It localises to the bacterial flagellum. Its function is as follows. Flagellin is the subunit protein which polymerizes to form the filaments of bacterial flagella. This chain is Flagellin 1 (fliC1), found in Proteus mirabilis.